Here is a 410-residue protein sequence, read N- to C-terminus: Chitinase-3-like protein 1 (410 aa).

Positions 1–48 (MGVKAAQTGIWASQGQSIRVVGFQAQTAHRAICLLGFVVLVLLQCCSA) are cleaved as a signal peptide. Residues 49-410 (YKLVCYYTSW…NAIKDALAAT (362 aa)) form the GH18 domain. A disulfide bridge links C53 with C78. N87 carries N-linked (GlcNAc...) asparagine glycosylation. Chitin is bound by residues 97-98 (EW), 124-127 (GGWN), Y168, 231-234 (MTYD), and R290. Residues C327 and C391 are joined by a disulfide bond. Positions 351–365 (QWVGYDDQESVKSKV) are important for AKT1 activation and IL8 production. Residue W379 coordinates chitin.

Belongs to the glycosyl hydrolase 18 family. As to quaternary structure, monomer.

It localises to the secreted. The protein localises to the extracellular space. It is found in the cytoplasm. Its subcellular location is the perinuclear region. The protein resides in the endoplasmic reticulum. Its function is as follows. Carbohydrate-binding lectin with a preference for chitin. Has no chitinase activity. May play a role in tissue remodeling and in the capacity of cells to respond to and cope with changes in their environment. Plays a role in T-helper cell type 2 (Th2) inflammatory response and IL-13-induced inflammation, regulating allergen sensitization, inflammatory cell apoptosis, dendritic cell accumulation and M2 macrophage differentiation. Facilitates invasion of pathogenic enteric bacteria into colonic mucosa and lymphoid organs. Mediates activation of AKT1 signaling pathway and subsequent IL8 production in colonic epithelial cells. Regulates antibacterial responses in lung by contributing to macrophage bacterial killing, controlling bacterial dissemination and augmenting host tolerance. Also regulates hyperoxia-induced injury, inflammation and epithelial apoptosis in lung. The sequence is that of Chitinase-3-like protein 1 (CHI3L1) from Pongo abelii (Sumatran orangutan).